A 429-amino-acid polypeptide reads, in one-letter code: Glutamate dehydrogenase B (429 aa).

Residues 1–20 (MAQTPPPESAPSTDSEPETA) form a disordered region. Lys-119 is a catalytic residue.

This sequence belongs to the Glu/Leu/Phe/Val dehydrogenases family. As to quaternary structure, homohexamer.

The protein is Glutamate dehydrogenase B (gdhB) of Halobacterium salinarum (strain ATCC 700922 / JCM 11081 / NRC-1) (Halobacterium halobium).